A 619-amino-acid chain; its full sequence is Chaperone protein HscA homolog (619 aa).

Belongs to the heat shock protein 70 family.

Chaperone involved in the maturation of iron-sulfur cluster-containing proteins. Has a low intrinsic ATPase activity which is markedly stimulated by HscB. The sequence is that of Chaperone protein HscA homolog from Pseudomonas aeruginosa (strain UCBPP-PA14).